A 376-amino-acid polypeptide reads, in one-letter code: Pyruvate dehydrogenase E1 component subunit beta-2, mitochondrial (376 aa).

A mitochondrion-targeting transit peptide spans 1–36 (MLGAARRQLGSGPMLGQVLRRLRPATAAAADAARAY). Glu99 is a thiamine diphosphate binding site. Positions 152, 200, 201, and 203 each coordinate K(+).

As to quaternary structure, tetramer of 2 alpha and 2 beta subunits. Thiamine diphosphate is required as a cofactor.

The protein localises to the mitochondrion matrix. The enzyme catalyses N(6)-[(R)-lipoyl]-L-lysyl-[protein] + pyruvate + H(+) = N(6)-[(R)-S(8)-acetyldihydrolipoyl]-L-lysyl-[protein] + CO2. Functionally, the pyruvate dehydrogenase complex catalyzes the overall conversion of pyruvate to acetyl-CoA and CO(2). It contains multiple copies of three enzymatic components: pyruvate dehydrogenase (E1), dihydrolipoamide acetyltransferase (E2) and lipoamide dehydrogenase (E3). This chain is Pyruvate dehydrogenase E1 component subunit beta-2, mitochondrial, found in Oryza sativa subsp. japonica (Rice).